The chain runs to 317 residues: Taste receptor type 2 member 14 (317 aa).

Over 1–7 the chain is Extracellular; the sequence is MGGVIKS. The chain crosses the membrane as a helical span at residues 8 to 28; the sequence is IFTFVLIVEFIIGNLGNSFIA. Residues 29–55 are Cytoplasmic-facing; the sequence is LVNCIDWVKGRKISSVDRILTALAISK. A helical transmembrane segment spans residues 56-76; the sequence is ISLVWLIFGSWCVSVFFPALF. Over 77–87 the chain is Extracellular; the sequence is ATEKMFRMLTN. Residues Thr86 and Trp89 each contribute to the cholesterol site. A helical transmembrane segment spans residues 88–108; that stretch reads IWTVINHFSVWLATGLGTFYF. Residues 109–129 lie on the Cytoplasmic side of the membrane; the sequence is LKIANFSNSIFLYLKWRVKKV. A helical transmembrane segment spans residues 130–150; sequence VLVLLLVTSVFLFLNIALINI. Residues 151 to 184 lie on the Extracellular side of the membrane; sequence HINASINGYRRNKTCSSDSSNFTRFSSLIVLTST. Asn153, Asn162, and Asn171 each carry an N-linked (GlcNAc...) asparagine glycan. Val180 contacts cholesterol. Residues 185–205 form a helical membrane-spanning segment; the sequence is VFIFIPFTLSLAMFLLLIFSX. The Cytoplasmic portion of the chain corresponds to 206–232; the sequence is WKHRKKMQHTVKRSGDASTKAHRGVKS. The helical transmembrane segment at 233–253 threads the bilayer; it reads VXTFFLLYAIFCLSFFISVWT. The Extracellular portion of the chain corresponds to 254–261; sequence SERLEENL. A helical transmembrane segment spans residues 262–282; that stretch reads IILSQVMGMAYPSCHSCVLIL. Positions 265 and 268 each coordinate cholesterol. The Cytoplasmic segment spans residues 283–317; that stretch reads GNKKLRQASLSVLLWLRYMFKDGEPSGHKEFRESS.

The protein belongs to the G-protein coupled receptor T2R family. In terms of assembly, core component of the TAS2R14-GNAI1 complex, consisting of TAS2R14, GNAI1, GNB1 and GNG2; within the complex interacts with GNAI1. Core component of the TAS2R14-GNAT3 complex, consisting of TAS2R14, GNAT3, GNB1 and GNG2; within the complex interacts with GNAT3. Core component of the TAS2R14-GNAS2 complex, consisting of TAS2R14, GNAS2, GNB1 and GNG2; within the complex interacts with GNAS2.

It localises to the membrane. It carries out the reaction Ca(2+)(in) = Ca(2+)(out). The enzyme catalyses 3',5'-cyclic AMP(in) = 3',5'-cyclic AMP(out). Its activity is regulated as follows. Basal activity is enhanced by binding to bitter tastants, such as flufenamic acid and aristolochic acid. Regulated by cholesterol in a concentration-dependent manner. Functionally, gustducin-linked G-protein coupled receptor that plays a role in the perception of bitterness. The activity of this receptor stimulates GNAT3, activating the gustducin G-protein pathway. Likely plays a role in sensing the chemical composition of the gastrointestinal content and other extra-oral tissues via the inhibitory G-protein pathways. This is Taste receptor type 2 member 14 (TAS2R14) from Pan troglodytes (Chimpanzee).